Reading from the N-terminus, the 554-residue chain is Capsid vertex component 2 (554 aa).

Residues Met-1 to Lys-46 are interaction with major capsid protein/MCP.

The protein belongs to the herpesviridae CVC2 protein family. In terms of assembly, heterodimerizes with CVC1. Interacts with major capsid protein/MCP and triplex capsid protein 1/TRX1 at the pentamer vertices. Interacts with the large tegument protein/LTP.

The protein localises to the virion. It is found in the host nucleus. Functionally, capsid vertex-specific component that plays a role during viral DNA encapsidation, assuring correct genome cleavage and presumably stabilizing capsids that contain full-length viral genomes. Participates in the interaction between the capsid and the tegument through interaction with the large tegument protein/LTP. In Human herpesvirus 7 (strain JI) (HHV-7), this protein is Capsid vertex component 2.